The sequence spans 536 residues: Austinoid biosynthesis cluster protein W (536 aa).

The first 19 residues, 1–19 (MKHPTVALLGVGMLGCAAA), serve as a signal peptide directing secretion. 5 disordered regions span residues 141 to 164 (GSAP…PGFP), 185 to 220 (SLPG…PGFS), 261 to 302 (FGVP…ASNG), 385 to 423 (PGSA…ASNG), and 491 to 536 (PSPT…SSAE). Over residues 195–208 (SGPSQAAAAPSTGD) the composition is skewed to low complexity. The segment covering 209-220 (SGSGLPGSPGFS) has biased composition (gly residues). Low complexity-rich tracts occupy residues 287-302 (AGNA…ASNG) and 408-423 (AGNA…ASNG).

Its pathway is secondary metabolite biosynthesis; terpenoid biosynthesis. Its function is as follows. Part of the gene cluster that mediates the biosynthesis of calidodehydroaustin, a fungal meroterpenoid. The first step of the pathway is the synthesis of 3,5-dimethylorsellinic acid by the polyketide synthase ausA. 3,5-dimethylorsellinic acid is then prenylated by the polyprenyl transferase ausN. Further epoxidation by the FAD-dependent monooxygenase ausM and cyclization by the probable terpene cyclase ausL lead to the formation of protoaustinoid A. Protoaustinoid A is then oxidized to spiro-lactone preaustinoid A3 by the combined action of the FAD-binding monooxygenases ausB and ausC, and the dioxygenase ausE. Acid-catalyzed keto-rearrangement and ring contraction of the tetraketide portion of preaustinoid A3 by ausJ lead to the formation of preaustinoid A4. The aldo-keto reductase ausK, with the help of ausH, is involved in the next step by transforming preaustinoid A4 into isoaustinone which is in turn hydroxylated by the P450 monooxygenase ausI to form austinolide. The cytochrome P450 monooxygenase ausG modifies austinolide to austinol. Austinol is further acetylated to austin by the O-acetyltransferase ausP, which spontaneously changes to dehydroaustin. The cytochrome P450 monooxygenase ausR then converts dehydroaustin is into 7-dehydrodehydroaustin. The hydroxylation catalyzed by ausR permits the O-acetyltransferase ausQ to add an additional acetyl group to the molecule, leading to the formation of acetoxydehydroaustin. The short chain dehydrogenase ausT catalyzes the reduction of the double bond present between carbon atoms 1 and 2 to convert 7-dehydrodehydroaustin into 1,2-dihydro-7-hydroxydehydroaustin. AusQ catalyzes not only an acetylation reaction but also the addition of the PKS ausV diketide product to 1,2-dihydro-7-hydroxydehydroaustin, forming precalidodehydroaustin. Finally, the iron/alpha-ketoglutarate-dependent dioxygenase converts precalidodehydroaustin into calidodehydroaustin. The protein is Austinoid biosynthesis cluster protein W of Aspergillus calidoustus.